Reading from the N-terminus, the 100-residue chain is Small ribosomal subunit protein uS14 (100 aa).

Belongs to the universal ribosomal protein uS14 family. In terms of assembly, part of the 30S ribosomal subunit. Contacts proteins S3 and S10.

In terms of biological role, binds 16S rRNA, required for the assembly of 30S particles and may also be responsible for determining the conformation of the 16S rRNA at the A site. The polypeptide is Small ribosomal subunit protein uS14 (Prochlorococcus marinus (strain MIT 9215)).